A 391-amino-acid chain; its full sequence is MRIPCLLRPLLGWFFGLCILFSALFGNYIITLFLGLPILGRHKQWRNLMDRAISYWMTIPMGLLEFLMGVRIRVSGDEIEFGSPAMIVMNHRTRLDWMYMWCALYQINPWLITSNKISLKAQLKKLPGAGFGMAAAQFVFLERNAEVDKRSFDDAIDYFKNIDKKYQILLFPEGTDKSEWTTLKSREFAKKNGLRHLDYVLYPRTTGFLHLLNKMREQEYVEYIYDITIAYPYNIVQSEIDLVLKGASPREVHFHIRKIPISQVPLNEQDASRWLTDRWTIKEQLLHDFYSEEQPINRQFPVERGDGVWRSWKEPRRHFYVKLTSLMFWTLVISFCSYHIFFVRTLQLGFLYFFVISFYLSWRYGGIDKYIIFKWQESRKSLQKSPSSSSI.

Helical transmembrane passes span 10–30 (LLGW…NYII), 52–72 (AISY…GVRI), 97–119 (WMYM…KISL), 323–343 (LTSL…IFFV), and 347–367 (QLGF…YGGI).

It belongs to the 1-acyl-sn-glycerol-3-phosphate acyltransferase family. In terms of tissue distribution, expressed in seam cells, vulval epithelial cells and the major epithelial syncytium hyp7, and in several head neurons including AIY interneurons.

The protein resides in the endoplasmic reticulum membrane. It carries out the reaction a 2-acyl-sn-glycero-3-phospho-D-myo-inositol + an acyl-CoA = a 1,2-diacyl-sn-glycero-3-phospho-(1D-myo-inositol) + CoA. It catalyses the reaction a 2-acyl-sn-glycero-3-phospho-D-myo-inositol + octadecanoyl-CoA = 1-octadecanoyl-2-acyl-sn-glycero-3-phospho-1D-myo-inositol + CoA. The protein operates within phospholipid metabolism; phosphatidylinositol metabolism. Its function is as follows. Acyltransferase required for the fatty acid remodeling of phosphatidylinositol (1,2-diacyl-sn-glycero-3-phosphoinositol or PI). Mediates the conversion of lysophosphatidylinositol (2-acylglycerophosphatidylinositol or LPI) into PI (LPIAT activity). Has preference for saturated and mono-unsaturated fatty acids as acyl donors and sn-2-acyl lysoPI (2-acyl-sn-glycero-3-phospho-D-myo-inositol) as acyl acceptor. Contributes to the asymmetric cell division of epithelial cells. Asymmetric cell division is the fundamental mechanism by which multicellular organisms generate cell diversity. This Caenorhabditis elegans protein is Lysophosphatidylinositol acyltransferase 10.